The following is a 507-amino-acid chain: GMP synthase [glutamine-hydrolyzing] (507 aa).

The Glutamine amidotransferase type-1 domain occupies T9 to G202. C86 acts as the Nucleophile in catalysis. Catalysis depends on residues H176 and E178. In terms of domain architecture, GMPS ATP-PPase spans W203 to R395. Position 230-236 (S230–S236) interacts with ATP.

Homodimer.

It carries out the reaction XMP + L-glutamine + ATP + H2O = GMP + L-glutamate + AMP + diphosphate + 2 H(+). The protein operates within purine metabolism; GMP biosynthesis; GMP from XMP (L-Gln route): step 1/1. In terms of biological role, catalyzes the synthesis of GMP from XMP. The chain is GMP synthase [glutamine-hydrolyzing] from Brucella melitensis biotype 1 (strain ATCC 23456 / CCUG 17765 / NCTC 10094 / 16M).